The sequence spans 131 residues: Leptin receptor gene-related protein (131 aa).

The next 4 helical transmembrane spans lie at 7–27 (LVAL…GCAL), 32–52 (VYWP…HFIA), 69–89 (LAYF…VILA), and 100–120 (GLVL…FLVF).

This sequence belongs to the OB-RGRP/VPS55 family. In terms of assembly, interacts with LEPR. Interacts with RAB13.

The protein localises to the golgi apparatus membrane. Its subcellular location is the endosome membrane. In terms of biological role, negatively regulates leptin receptor (LEPR) cell surface expression, and thus decreases response to leptin/LEP. Negatively regulates growth hormone (GH) receptor cell surface expression in liver. May play a role in liver resistance to GH during periods of reduced nutrient availability. The chain is Leptin receptor gene-related protein (LEPROT) from Sus scrofa (Pig).